Here is a 174-residue protein sequence, read N- to C-terminus: MLKGIILIVTIQLVNANFFGVFGKPLYNPFNKDKYMIDFITTFNKLMNMKQPQFPHPKSYPGFPPLFPGIKGKKSVFKTIDFTDMAPGSKKTFRVDNGQGIAFRSKSGNAGGMSFSSGTGGGKGFAFGGTLGGGSNGEFVMSQSGPGLKGGKVTYSKGVPKFAKGLFGMLPFFK.

The N-terminal stretch at 1–16 (MLKGIILIVTIQLVNA) is a signal peptide.

Component of the organic matrix of calcified shell layers like nacre and prisms.

The protein localises to the secreted. The sequence is that of Mytilin-3 from Mytilus californianus (California mussel).